Here is a 492-residue protein sequence, read N- to C-terminus: G2/mitotic-specific cyclin CLB2 (492 aa).

The tract at residues 1-176 is disordered; it reads MPQVTKTNNE…QPEVGERSQS (176 aa). Over residues 23–33 the composition is skewed to polar residues; sequence QESISTIKNTT. The segment covering 34–58 has biased composition (low complexity); it reads ISNSQHKQQTQQQISSPPQVSVTSS. Over residues 59 to 83 the composition is skewed to polar residues; the sequence is EGVSHVNTRQYLGDVSNQYITNAKP. Residues 111–135 show a composition bias toward low complexity; sequence ASDNNNNGSTSSSSNSSNNNNNDAN. A Cyclin N-terminal domain is found at 208–334; sequence EIFSYYYELE…MLTILNFDLN (127 aa).

This sequence belongs to the cyclin family. Cyclin AB subfamily.

2/mitotic-specific cyclin essential for the control of the cell cycle at the G2/M (mitosis) transition. G2/M cyclins accumulate steadily during G2 and are abruptly destroyed at mitosis. Degradation is necessary for the cell to exit from mitosis. Plays a role in morphogenesis by negatively regulating polarized growth. Through binding to CDC28 regulates cytokinesis, partly by phosphorylation of the actomyosin ring component IQG1. Also involved in the phosphorylation of CDC6 and CDC54. This chain is G2/mitotic-specific cyclin CLB2 (CLB2), found in Candida albicans (strain SC5314 / ATCC MYA-2876) (Yeast).